A 134-amino-acid polypeptide reads, in one-letter code: MSSLQAMKTLSLVLLVALLSMERAQGLRCYRCLAVLEGASCSVVSCPFLDGVCVSQKVSVFGSKVRGENKLSLLSCQKDVGFPLLKLTSAVVDSQISCCKGDLCNAVVLAASSPWALCVQLLLSLGSVFLWALL.

The N-terminal stretch at 1-26 (MSSLQAMKTLSLVLLVALLSMERAQG) is a signal peptide. Residues 28–76 (RCYRCLAVLEGASCSVVSCPFLDGVCVSQKVSVFGSKVRGENKLSLLSC) enclose the UPAR/Ly6 domain. 4 cysteine pairs are disulfide-bonded: Cys-29/Cys-53, Cys-32/Cys-41, Cys-76/Cys-98, and Cys-99/Cys-104. Asn-105 is lipidated: GPI-anchor amidated asparagine. Residues 106–134 (AVVLAASSPWALCVQLLLSLGSVFLWALL) constitute a propeptide, removed in mature form.

It is found in the cell membrane. The polypeptide is Lymphocyte antigen 6S (Homo sapiens (Human)).